A 493-amino-acid polypeptide reads, in one-letter code: 3-octaprenyl-4-hydroxybenzoate carboxy-lyase (493 aa).

N172 contributes to the Mn(2+) binding site. Residues 175 to 177 (IYR), 189 to 191 (RWL), and 194 to 195 (RG) each bind prenylated FMN. Position 238 (E238) interacts with Mn(2+). D287 serves as the catalytic Proton donor.

It belongs to the UbiD family. Homohexamer. It depends on prenylated FMN as a cofactor. Mn(2+) serves as cofactor.

The protein localises to the cell membrane. The enzyme catalyses a 4-hydroxy-3-(all-trans-polyprenyl)benzoate + H(+) = a 2-(all-trans-polyprenyl)phenol + CO2. Its pathway is cofactor biosynthesis; ubiquinone biosynthesis. In terms of biological role, catalyzes the decarboxylation of 3-octaprenyl-4-hydroxy benzoate to 2-octaprenylphenol, an intermediate step in ubiquinone biosynthesis. In Shewanella baltica (strain OS155 / ATCC BAA-1091), this protein is 3-octaprenyl-4-hydroxybenzoate carboxy-lyase.